The following is a 401-amino-acid chain: Elongation factor Tu (401 aa).

Positions 10-211 constitute a tr-type G domain; it reads KPHLNIGTIG…AVDTYVPNPT (202 aa). The G1 stretch occupies residues 19–26; it reads GHVDHGKT. 19-26 contacts GTP; the sequence is GHVDHGKT. Mg(2+) is bound at residue threonine 26. The tract at residues 62–66 is G2; it reads GITIA. The tract at residues 83–86 is G3; sequence DCPG. GTP contacts are provided by residues 83–87 and 138–141; these read DCPGH and NKAD. Residues 138–141 are G4; sequence NKAD. Residues 179-181 are G5; sequence SAL.

Belongs to the TRAFAC class translation factor GTPase superfamily. Classic translation factor GTPase family. EF-Tu/EF-1A subfamily. As to quaternary structure, monomer.

The protein resides in the cytoplasm. It catalyses the reaction GTP + H2O = GDP + phosphate + H(+). Its function is as follows. GTP hydrolase that promotes the GTP-dependent binding of aminoacyl-tRNA to the A-site of ribosomes during protein biosynthesis. This is Elongation factor Tu from Leptospira biflexa serovar Patoc (strain Patoc 1 / Ames).